A 508-amino-acid polypeptide reads, in one-letter code: Histone acetyltransferase type B catalytic subunit (508 aa).

2 interaction with histone H4 N-terminus regions span residues 44–46 and 207–209; these read EKE and YRY. Acetyl-CoA-binding positions include 249 to 251 and 256 to 262; these read FII and QQKGLGS. The Proton donor/acceptor role is filled by E284. Disordered stretches follow at residues 364 to 399 and 461 to 508; these read SVRP…PTPE and QADG…SGHA. Over residues 387 to 399 the composition is skewed to basic and acidic residues; that stretch reads KGHEKALPKPTPE.

This sequence belongs to the HAT1 family. As to quaternary structure, component of the HAT-B complex composed of at least hat-1 and hat-2. The HAT-B complex binds to histone H4 tail.

It is found in the cytoplasm. Its subcellular location is the nucleus. The catalysed reaction is L-lysyl-[protein] + acetyl-CoA = N(6)-acetyl-L-lysyl-[protein] + CoA + H(+). Its function is as follows. Catalytic component of the histone acetylase B (HAT-B) complex. Acetylates 'Lys-12' of histone H4 which is required for telomeric silencing. Has intrinsic substrate specificity that modifies lysine in recognition sequence GXGKXG. Involved in DNA double-strand break repair. In Neurospora crassa (strain ATCC 24698 / 74-OR23-1A / CBS 708.71 / DSM 1257 / FGSC 987), this protein is Histone acetyltransferase type B catalytic subunit (hat-1).